The chain runs to 1398 residues: DNA-directed RNA polymerase subunit beta' (1398 aa).

Zn(2+)-binding residues include cysteine 70, cysteine 72, cysteine 85, and cysteine 88. Aspartate 460, aspartate 462, and aspartate 464 together coordinate Mg(2+). Cysteine 814, cysteine 888, cysteine 895, and cysteine 898 together coordinate Zn(2+).

This sequence belongs to the RNA polymerase beta' chain family. In terms of assembly, the RNAP catalytic core consists of 2 alpha, 1 beta, 1 beta' and 1 omega subunit. When a sigma factor is associated with the core the holoenzyme is formed, which can initiate transcription. Mg(2+) serves as cofactor. Requires Zn(2+) as cofactor.

The catalysed reaction is RNA(n) + a ribonucleoside 5'-triphosphate = RNA(n+1) + diphosphate. Functionally, DNA-dependent RNA polymerase catalyzes the transcription of DNA into RNA using the four ribonucleoside triphosphates as substrates. In Pseudomonas putida (Arthrobacter siderocapsulatus), this protein is DNA-directed RNA polymerase subunit beta'.